Here is a 307-residue protein sequence, read N- to C-terminus: 4-diphosphocytidyl-2-C-methyl-D-erythritol kinase (307 aa).

Lys9 is a catalytic residue. 94–104 is an ATP binding site; sequence PIGAGLAGGSS. The active site involves Asp136.

It belongs to the GHMP kinase family. IspE subfamily.

The catalysed reaction is 4-CDP-2-C-methyl-D-erythritol + ATP = 4-CDP-2-C-methyl-D-erythritol 2-phosphate + ADP + H(+). It functions in the pathway isoprenoid biosynthesis; isopentenyl diphosphate biosynthesis via DXP pathway; isopentenyl diphosphate from 1-deoxy-D-xylulose 5-phosphate: step 3/6. Functionally, catalyzes the phosphorylation of the position 2 hydroxy group of 4-diphosphocytidyl-2C-methyl-D-erythritol. The sequence is that of 4-diphosphocytidyl-2-C-methyl-D-erythritol kinase from Synechococcus sp. (strain CC9605).